A 164-amino-acid chain; its full sequence is 6,7-dimethyl-8-ribityllumazine synthase (164 aa).

Residues tyrosine 27, 58–60 (ALE), and 87–89 (CVI) each bind 5-amino-6-(D-ribitylamino)uracil. Residue 92–93 (ET) coordinates (2S)-2-hydroxy-3-oxobutyl phosphate. The active-site Proton donor is histidine 95. Position 120 (asparagine 120) interacts with 5-amino-6-(D-ribitylamino)uracil. Arginine 134 lines the (2S)-2-hydroxy-3-oxobutyl phosphate pocket.

It belongs to the DMRL synthase family.

The catalysed reaction is (2S)-2-hydroxy-3-oxobutyl phosphate + 5-amino-6-(D-ribitylamino)uracil = 6,7-dimethyl-8-(1-D-ribityl)lumazine + phosphate + 2 H2O + H(+). The protein operates within cofactor biosynthesis; riboflavin biosynthesis; riboflavin from 2-hydroxy-3-oxobutyl phosphate and 5-amino-6-(D-ribitylamino)uracil: step 1/2. Functionally, catalyzes the formation of 6,7-dimethyl-8-ribityllumazine by condensation of 5-amino-6-(D-ribitylamino)uracil with 3,4-dihydroxy-2-butanone 4-phosphate. This is the penultimate step in the biosynthesis of riboflavin. This chain is 6,7-dimethyl-8-ribityllumazine synthase, found in Methylocella silvestris (strain DSM 15510 / CIP 108128 / LMG 27833 / NCIMB 13906 / BL2).